Reading from the N-terminus, the 166-residue chain is Cofilin-1 (166 aa).

N-acetylalanine is present on Ala-2. Ser-3 carries the post-translational modification Phosphoserine; by NRK. One can recognise an ADF-H domain in the interval 4–153 (GVAVSDGVIK…KDRCTLAEKL (150 aa)). Phosphoserine is present on Ser-8. The residue at position 13 (Lys-13) is an N6-acetyllysine. Phosphothreonine is present on Thr-25. Residues 30 to 34 (KKRKK) carry the Nuclear localization signal motif. Residue Ser-41 is modified to Phosphoserine. Residue Thr-63 is modified to Phosphothreonine. Tyr-68 carries the phosphotyrosine modification. An N6-acetyllysine modification is found at Lys-73. At Tyr-82 the chain carries Phosphotyrosine. Phosphoserine is present on Ser-108. Residue Lys-132 forms a Glycyl lysine isopeptide (Lys-Gly) (interchain with G-Cter in SUMO2) linkage. A Phosphotyrosine modification is found at Tyr-140. Lys-144 carries the N6-acetyllysine modification. The residue at position 156 (Ser-156) is a Phosphoserine.

The protein belongs to the actin-binding proteins ADF family. Can bind G- and F-actin in a 1:1 ratio of cofilin to actin. It is a major component of intranuclear and cytoplasmic actin rods. Interacts with the subcortical maternal complex (SCMC) via interaction with TLE6 isoform 1 and NLRP5. Interacts with C9orf72. In terms of assembly, (Microbial infection) Interacts with human respiratory syncytial virus (HRSV) matrix protein; this interaction probably facilitates viral replication. Post-translationally, inactivated by phosphorylation on Ser-3. Phosphorylated on Ser-3 in resting cells. Dephosphorylated by PDXP/chronophin; this restores its activity in promoting actin filament depolymerization. The phosphorylation of Ser-24 may prevent recognition of the nuclear localization signal. Phosphorylated via a ARRB1-RAC1-LIMK1-PAK1 cascade upon active ligand stimulation of atypical chemokine receptor ACKR2. Widely distributed in various tissues.

Its subcellular location is the nucleus matrix. It localises to the cytoplasm. The protein localises to the cytoskeleton. The protein resides in the cell projection. It is found in the ruffle membrane. Its subcellular location is the lamellipodium membrane. It localises to the lamellipodium. The protein localises to the growth cone. The protein resides in the axon. Its function is as follows. Binds to F-actin and exhibits pH-sensitive F-actin depolymerizing activity. In conjunction with the subcortical maternal complex (SCMC), plays an essential role for zygotes to progress beyond the first embryonic cell divisions via regulation of actin dynamics. Required for the centralization of the mitotic spindle and symmetric division of zygotes. Plays a role in the regulation of cell morphology and cytoskeletal organization in epithelial cells. Required for the up-regulation of atypical chemokine receptor ACKR2 from endosomal compartment to cell membrane, increasing its efficiency in chemokine uptake and degradation. Required for neural tube morphogenesis and neural crest cell migration. This is Cofilin-1 (CFL1) from Homo sapiens (Human).